The following is a 90-amino-acid chain: Large ribosomal subunit protein eL33 (90 aa).

The protein belongs to the eukaryotic ribosomal protein eL33 family.

The protein is Large ribosomal subunit protein eL33 of Methanopyrus kandleri (strain AV19 / DSM 6324 / JCM 9639 / NBRC 100938).